Reading from the N-terminus, the 125-residue chain is Thioredoxin H-type (125 aa).

A Thioredoxin domain is found at 2-112; the sequence is AEGNVFACHS…LERKVAALAA (111 aa). Catalysis depends on nucleophile residues cysteine 38 and cysteine 41. Cysteine 38 and cysteine 41 are joined by a disulfide.

It belongs to the thioredoxin family. Plant H-type subfamily.

Its subcellular location is the cytoplasm. Its function is as follows. Participates in various redox reactions through the reversible oxidation of the active center dithiol to a disulfide. The H form is known to activate a number of cytosolic enzymes. This is Thioredoxin H-type (SB09) from Picea mariana (Black spruce).